The following is a 47-amino-acid chain: Large ribosomal subunit protein bL33A (47 aa).

This sequence belongs to the bacterial ribosomal protein bL33 family.

This Staphylococcus aureus (strain JH1) protein is Large ribosomal subunit protein bL33A.